The following is a 253-amino-acid chain: Tryptophan synthase alpha chain (253 aa).

Catalysis depends on proton acceptor residues Glu-47 and Asp-58.

The protein belongs to the TrpA family. In terms of assembly, tetramer of two alpha and two beta chains.

It catalyses the reaction (1S,2R)-1-C-(indol-3-yl)glycerol 3-phosphate + L-serine = D-glyceraldehyde 3-phosphate + L-tryptophan + H2O. Its pathway is amino-acid biosynthesis; L-tryptophan biosynthesis; L-tryptophan from chorismate: step 5/5. In terms of biological role, the alpha subunit is responsible for the aldol cleavage of indoleglycerol phosphate to indole and glyceraldehyde 3-phosphate. The chain is Tryptophan synthase alpha chain from Lactococcus lactis subsp. lactis (strain IL1403) (Streptococcus lactis).